Consider the following 159-residue polypeptide: Cytochrome c-type biogenesis protein CcmE (159 aa).

Residues 1–7 (MTRKGRR) lie on the Cytoplasmic side of the membrane. The chain crosses the membrane as a helical; Signal-anchor for type II membrane protein span at residues 8–28 (LVLIGAGLGVLALAAGLILSA). Over 29–159 (LNDTIVFFRS…AAPVQRAPGS (131 aa)) the chain is Periplasmic. His121 and Tyr125 together coordinate heme. The interval 134 to 159 (LKKQGRWQEGGPAPGTAAPVQRAPGS) is disordered.

It belongs to the CcmE/CycJ family.

It localises to the cell inner membrane. In terms of biological role, heme chaperone required for the biogenesis of c-type cytochromes. Transiently binds heme delivered by CcmC and transfers the heme to apo-cytochromes in a process facilitated by CcmF and CcmH. The sequence is that of Cytochrome c-type biogenesis protein CcmE from Xanthobacter autotrophicus (strain ATCC BAA-1158 / Py2).